The sequence spans 75 residues: UPF0235 protein Ava_3894 (75 aa).

Residues 1–32 (MQKKVKVKPNSKQQKIAEQDDGSLTVHLKSPP) form a disordered region.

It belongs to the UPF0235 family.

The protein is UPF0235 protein Ava_3894 of Trichormus variabilis (strain ATCC 29413 / PCC 7937) (Anabaena variabilis).